The primary structure comprises 921 residues: Protein translocase subunit SecA (921 aa).

ATP contacts are provided by residues Q87, 105 to 109 (GEGKT), and D516. C905, C907, C916, and H917 together coordinate Zn(2+).

It belongs to the SecA family. As to quaternary structure, monomer and homodimer. Part of the essential Sec protein translocation apparatus which comprises SecA, SecYEG and auxiliary proteins SecDF-YajC and YidC. Zn(2+) is required as a cofactor.

The protein resides in the cell inner membrane. The protein localises to the cytoplasm. It catalyses the reaction ATP + H2O + cellular proteinSide 1 = ADP + phosphate + cellular proteinSide 2.. In terms of biological role, part of the Sec protein translocase complex. Interacts with the SecYEG preprotein conducting channel. Has a central role in coupling the hydrolysis of ATP to the transfer of proteins into and across the cell membrane, serving both as a receptor for the preprotein-SecB complex and as an ATP-driven molecular motor driving the stepwise translocation of polypeptide chains across the membrane. In Polaromonas sp. (strain JS666 / ATCC BAA-500), this protein is Protein translocase subunit SecA.